The primary structure comprises 285 residues: uncharacterized protein (285 aa).

Mn(2+)-binding residues include His110, Asp131, His133, Asp135, Asp214, and Asp216.

Belongs to the arginase family. Mn(2+) serves as cofactor.

This is an uncharacterized protein from Methanothermus fervidus.